Consider the following 146-residue polypeptide: D-aminoacyl-tRNA deacylase (146 aa).

The Gly-cisPro motif, important for rejection of L-amino acids motif lies at 138–139 (GP).

It belongs to the DTD family. As to quaternary structure, homodimer.

The protein resides in the cytoplasm. The catalysed reaction is glycyl-tRNA(Ala) + H2O = tRNA(Ala) + glycine + H(+). It carries out the reaction a D-aminoacyl-tRNA + H2O = a tRNA + a D-alpha-amino acid + H(+). In terms of biological role, an aminoacyl-tRNA editing enzyme that deacylates mischarged D-aminoacyl-tRNAs. Also deacylates mischarged glycyl-tRNA(Ala), protecting cells against glycine mischarging by AlaRS. Acts via tRNA-based rather than protein-based catalysis; rejects L-amino acids rather than detecting D-amino acids in the active site. By recycling D-aminoacyl-tRNA to D-amino acids and free tRNA molecules, this enzyme counteracts the toxicity associated with the formation of D-aminoacyl-tRNA entities in vivo and helps enforce protein L-homochirality. This Stenotrophomonas maltophilia (strain R551-3) protein is D-aminoacyl-tRNA deacylase.